Reading from the N-terminus, the 278-residue chain is HTH-type transcriptional activator RhaS (278 aa).

The HTH araC/xylS-type domain maps to 174–272; sequence NQLMAWLEDH…NWSPRDIRQG (99 aa). 2 consecutive DNA-binding regions (H-T-H motif) follow at residues 191 to 212 and 239 to 262; these read EAVAEQFSLSLRTLHRQLKQHT and VTEIAYRCGFGDSNHFSTLFRREF.

Binds DNA as a dimer.

The protein localises to the cytoplasm. Functionally, activates expression of the rhaBAD and rhaT operons. In Salmonella enteritidis PT4 (strain P125109), this protein is HTH-type transcriptional activator RhaS.